A 309-amino-acid chain; its full sequence is MARGADGGDGASVWQHVFLLPEYLKDDSKKMKSGLVFVKLANPCSGEGTIYLFNMCLPQLFEIKVFKEKNHSWFINESVQSGGLLHFATPVDPLFLLLHYLIKADKESFQGKFQPLDQVVMDDMFPDCILLLKLPELEKLLQHVTEEKEVDKKKYYKYSKEKTLKWLGKKVNQTMAALKTNKVNVSARVQSTAFFSGGQVSSDKDEDYVRYAHGLISDYIPKQLSDDLSKYLKLPEPPASVRNPPSKKAKLSDEPVMAKEDYTKFNSKDFKTVKKNSKMTAAQKALAKVDKSGMKSIDSFFGTKHVKKK.

An N-acetylalanine modification is found at alanine 2. Lysine 295 is modified (N6-acetyllysine). At serine 296 the chain carries Phosphoserine.

It belongs to the RNase H2 subunit B family. In terms of assembly, the RNase H2 complex is a heterotrimer composed of the catalytic subunit RNASEH2A and the non-catalytic subunits RNASEH2B and RNASEH2C.

The protein resides in the nucleus. Functionally, non catalytic subunit of RNase H2, an endonuclease that specifically degrades the RNA of RNA:DNA hybrids. Participates in DNA replication, possibly by mediating the removal of lagging-strand Okazaki fragment RNA primers during DNA replication. Mediates the excision of single ribonucleotides from DNA:RNA duplexes. This Bos taurus (Bovine) protein is Ribonuclease H2 subunit B (RNASEH2B).